The chain runs to 147 residues: Diaminohydroxyphosphoribosylamino-pyrimidine deaminase (147 aa).

Residues 1–122 form the CMP/dCMP-type deaminase domain; the sequence is MKDRFYMTRA…LYLRKKGISV (122 aa). Position 50 (H50) interacts with Zn(2+). E52 functions as the Proton donor in the catalytic mechanism. Zn(2+) is bound by residues C75 and C84.

The protein belongs to the cytidine and deoxycytidylate deaminase family. Zn(2+) is required as a cofactor.

The catalysed reaction is 2,5-diamino-6-hydroxy-4-(5-phosphoribosylamino)-pyrimidine + H2O + H(+) = 5-amino-6-(5-phospho-D-ribosylamino)uracil + NH4(+). The protein operates within cofactor biosynthesis; riboflavin biosynthesis; 5-amino-6-(D-ribitylamino)uracil from GTP: step 2/4. This is Diaminohydroxyphosphoribosylamino-pyrimidine deaminase (ribD1) from Buchnera aphidicola subsp. Schizaphis graminum (strain Sg).